The sequence spans 243 residues: Aspartate/glutamate leucyltransferase (243 aa).

It belongs to the R-transferase family. Bpt subfamily.

The protein resides in the cytoplasm. It carries out the reaction N-terminal L-glutamyl-[protein] + L-leucyl-tRNA(Leu) = N-terminal L-leucyl-L-glutamyl-[protein] + tRNA(Leu) + H(+). It catalyses the reaction N-terminal L-aspartyl-[protein] + L-leucyl-tRNA(Leu) = N-terminal L-leucyl-L-aspartyl-[protein] + tRNA(Leu) + H(+). Functions in the N-end rule pathway of protein degradation where it conjugates Leu from its aminoacyl-tRNA to the N-termini of proteins containing an N-terminal aspartate or glutamate. In Teredinibacter turnerae (strain ATCC 39867 / T7901), this protein is Aspartate/glutamate leucyltransferase.